A 98-amino-acid chain; its full sequence is uncharacterized protein (98 aa).

The signal sequence occupies residues 1–23 (MKYVALAFVLSLVILQISAQVGA).

Nacreous layer of shell (at protein level). Expressed primarily in the mantle with highest level in the mantle pallium and lower level in the mantle edge.

It is found in the secreted. This is an uncharacterized protein from Pinctada maxima (Silver-lipped pearl oyster).